Reading from the N-terminus, the 140-residue chain is Ribosome maturation factor RimP (140 aa).

The protein belongs to the RimP family.

It localises to the cytoplasm. Its function is as follows. Required for maturation of 30S ribosomal subunits. The sequence is that of Ribosome maturation factor RimP from Campylobacter lari (strain RM2100 / D67 / ATCC BAA-1060).